A 303-amino-acid polypeptide reads, in one-letter code: Ornithine carbamoyltransferase (303 aa).

Carbamoyl phosphate contacts are provided by residues 52–55 (STRT), glutamine 79, arginine 103, and 130–133 (HPCQ). Residues asparagine 161, aspartate 222, and 226-227 (SM) contribute to the L-ornithine site. Carbamoyl phosphate contacts are provided by residues 262-263 (CL) and arginine 290.

Belongs to the aspartate/ornithine carbamoyltransferase superfamily. OTCase family.

The protein resides in the cytoplasm. It catalyses the reaction carbamoyl phosphate + L-ornithine = L-citrulline + phosphate + H(+). Its pathway is amino-acid biosynthesis; L-arginine biosynthesis; L-arginine from L-ornithine and carbamoyl phosphate: step 1/3. Functionally, reversibly catalyzes the transfer of the carbamoyl group from carbamoyl phosphate (CP) to the N(epsilon) atom of ornithine (ORN) to produce L-citrulline. In Geobacter metallireducens (strain ATCC 53774 / DSM 7210 / GS-15), this protein is Ornithine carbamoyltransferase.